A 386-amino-acid chain; its full sequence is Succinate--CoA ligase [ADP-forming] subunit beta (386 aa).

The 236-residue stretch at 9–244 folds into the ATP-grasp domain; it reads KAILRSYGVS…LDEEDPKEIE (236 aa). ATP-binding positions include lysine 46, 53 to 55, glutamate 99, cysteine 102, and glutamate 107; that span reads GRG. The Mg(2+) site is built by asparagine 199 and aspartate 213. Substrate-binding positions include asparagine 264 and 321 to 323; that span reads GIM.

Belongs to the succinate/malate CoA ligase beta subunit family. As to quaternary structure, heterotetramer of two alpha and two beta subunits. Requires Mg(2+) as cofactor.

The catalysed reaction is succinate + ATP + CoA = succinyl-CoA + ADP + phosphate. The enzyme catalyses GTP + succinate + CoA = succinyl-CoA + GDP + phosphate. It functions in the pathway carbohydrate metabolism; tricarboxylic acid cycle; succinate from succinyl-CoA (ligase route): step 1/1. Functionally, succinyl-CoA synthetase functions in the citric acid cycle (TCA), coupling the hydrolysis of succinyl-CoA to the synthesis of either ATP or GTP and thus represents the only step of substrate-level phosphorylation in the TCA. The beta subunit provides nucleotide specificity of the enzyme and binds the substrate succinate, while the binding sites for coenzyme A and phosphate are found in the alpha subunit. In Bacillus cytotoxicus (strain DSM 22905 / CIP 110041 / 391-98 / NVH 391-98), this protein is Succinate--CoA ligase [ADP-forming] subunit beta.